Here is a 446-residue protein sequence, read N- to C-terminus: Chromosomal replication initiator protein DnaA (446 aa).

The domain I, interacts with DnaA modulators stretch occupies residues 1-81 (MENIADLWNS…AKLNIRFIIP (81 aa)). Residues 81–109 (PQSQTEEEVDYPPAKAKKMNDESNHLPQS) form a domain II region. The interval 110–326 (MLNPKYTFDT…GALIRVVAYS (217 aa)) is domain III, AAA+ region. ATP-binding residues include Gly154, Gly156, Lys157, and Thr158. The domain IV, binds dsDNA stretch occupies residues 327 to 446 (SLINKDINAD…QIEEINDILK (120 aa)).

This sequence belongs to the DnaA family. In terms of assembly, oligomerizes as a right-handed, spiral filament on DNA at oriC.

It localises to the cytoplasm. Its function is as follows. Plays an essential role in the initiation and regulation of chromosomal replication. ATP-DnaA binds to the origin of replication (oriC) to initiate formation of the DNA replication initiation complex once per cell cycle. Binds the DnaA box (a 9 base pair repeat at the origin) and separates the double-stranded (ds)DNA. Forms a right-handed helical filament on oriC DNA; dsDNA binds to the exterior of the filament while single-stranded (ss)DNA is stabiized in the filament's interior. The ATP-DnaA-oriC complex binds and stabilizes one strand of the AT-rich DNA unwinding element (DUE), permitting loading of DNA polymerase. After initiation quickly degrades to an ADP-DnaA complex that is not apt for DNA replication. Binds acidic phospholipids. The polypeptide is Chromosomal replication initiator protein DnaA (Bacillus cytotoxicus (strain DSM 22905 / CIP 110041 / 391-98 / NVH 391-98)).